We begin with the raw amino-acid sequence, 251 residues long: V-set and transmembrane domain-containing protein 2B (251 aa).

The signal sequence occupies residues 1 to 25 (MEKQGLFSALCYLMLNTPLLFSVNA). The Ig-like V-type domain maps to 26-142 (TFTEVPKDVT…DETQEHKAQA (117 aa)). Topologically, residues 26-226 (TFTEVPKDVT…RQQHGSGTGP (201 aa)) are extracellular. Cys-46 and Cys-125 are disulfide-bonded. The tract at residues 157–213 (AAEAVSHIQSSGPRRNNPSSRATPEPGNKRAVPPAENLAPSLSTAASSSASPAPGKA) is disordered. Composition is skewed to low complexity over residues 166 to 177 (SSGPRRNNPSSR) and 195 to 213 (APSL…PGKA). A helical transmembrane segment spans residues 227-247 (IFANDPALYMFLLIFHQLVYL). Topologically, residues 248 to 251 (LLNH) are cytoplasmic.

It localises to the membrane. The sequence is that of V-set and transmembrane domain-containing protein 2B (vstm2b) from Xenopus tropicalis (Western clawed frog).